The chain runs to 570 residues: Trans-cinnamate:CoA ligase, peroxisomal (570 aa).

The Microbody targeting signal signature appears at 568 to 570 (ARL).

The protein belongs to the ATP-dependent AMP-binding enzyme family. In terms of assembly, monomer. The cofactor is K(+). As to expression, mostly expressed in flower organs, with highest levels in corollas and petal limbs, and, to a lesser extent, in petal tubes, sepals, pistils, stamen, stigma, anthers and ovaries. Also present at low levels in leaves, stems and roots.

It is found in the peroxisome. The enzyme catalyses (E)-4-coumarate + ATP + CoA = (E)-4-coumaroyl-CoA + AMP + diphosphate. It carries out the reaction (E)-caffeate + ATP + CoA = (E)-caffeoyl-CoA + AMP + diphosphate. The catalysed reaction is (E)-cinnamate + ATP + CoA = (E)-cinnamoyl-CoA + AMP + diphosphate. It participates in phenylpropanoid metabolism; trans-cinnamate biosynthesis. The protein operates within phytoalexin biosynthesis; 3,4',5-trihydroxystilbene biosynthesis; 3,4',5-trihydroxystilbene from trans-4-coumarate: step 1/2. Functionally, involved in the biosynthesis of floral volatile benzenoid/phenylpropanoid (FVBP) scent (e.g. benzylbenzoate, phenylethylbenzoate, and methylbenzoate). Catalyzes the formation of CoA esters of cinnamic acid, and, with lower efficiency, of 4-coumaric acid and caffeic acid. This is Trans-cinnamate:CoA ligase, peroxisomal from Petunia hybrida (Petunia).